Reading from the N-terminus, the 248-residue chain is MTLKRIFCAALALIVLQSVASAVDYCRLSCPEGRDHVGCRNAGFGAHCGSNPQTPKLHQEHIKMVLQKTNWLRGVVAEGSFCYPKAARMPVLVWDDELANLAALHTKGCVTETNKCRSTERFHSPGQSSYEISGDTLPSAMDILNFALRDWYLQKDNLTREDIGSYPAGEDKGLKNMANLISDKVTAIGCGLAQWRKENYKGAFHCSLLFIERSRSSIYQRGDNFATNCLKTHPTYRAGVLSDEQYSN.

The N-terminal stretch at 1–22 is a signal peptide; sequence MTLKRIFCAALALIVLQSVASA. The 143-residue stretch at 66–208 folds into the SCP domain; it reads LQKTNWLRGV…NYKGAFHCSL (143 aa). The Cell attachment site signature appears at 221 to 223; that stretch reads RGD.

Belongs to the CRISP family. As to expression, expressed in salivary glands.

It localises to the secreted. Its function is as follows. Inhibits platelet aggregation induced by all agonists tested (ADP, arachidonic acid, the thromboxane A2 analog U46619, thrombin, and snake venom snaclecs (TMVA that activates platelet through GPIB, and stejnulxin that specifically acts through GPVI (GP6))). May act by competing with fibrinogen for binding to glycoprotein IIb/IIIa (ITGA2B/ITGB3). This is Tabinhibitin 10 from Tabanus yao (Horsefly).